Here is an 809-residue protein sequence, read N- to C-terminus: F-BAR domain only protein 2 (809 aa).

The region spanning 3–250 (MAHFVENFWG…NMANTTIESL (248 aa)) is the F-BAR domain. Residues 3 to 274 (MAHFVENFWG…PGLIEFEECD (272 aa)) form a mediates dimerization and binding to membranes enriched in Pi(4,5)-P2 and induces their tubulation region. A coiled-coil region spans residues 87-156 (HLDLVRKLQE…CVEQERLKKE (70 aa)). Lys-297 participates in a covalent cross-link: Glycyl lysine isopeptide (Lys-Gly) (interchain with G-Cter in SUMO2). The tract at residues 301 to 352 (DAESVECPDADSLNIPDVDEEGFSIKPEANQNDTKENHFYSSSDSDSEDEEP) is disordered. Position 312 is a phosphoserine (Ser-312). At Thr-385 the chain carries Phosphothreonine. Phosphoserine occurs at positions 387, 394, 402, and 403. Positions 390–416 (VSRHSPVQMNRNSSNEELTKSKPSSLP) are enriched in polar residues. Disordered regions lie at residues 390–422 (VSRH…KGTN) and 435–536 (LESS…PVSL). Positions 435–456 (LESSSAPLTSSSSARPTTPLSL) are enriched in low complexity. Residues Ser-487, Ser-492, Ser-495, Ser-507, Ser-509, Ser-510, and Ser-532 each carry the phosphoserine modification. Positions 501 to 520 (PLARAESSSSISSSASLSAA) are enriched in low complexity. The segment at 520-809 (ANTPTVGVSR…FATGRYLADC (290 aa)) is mediates interaction with DAB2, EPS15, EPS15R and ITSN1. In terms of domain architecture, MHD spans 541 to 808 (TLPVAIALTE…RFATGRYLAD (268 aa)).

Belongs to the FCHO family. As to quaternary structure, homodimer; disulfide-linked. May form homotetramer. Interacts with AP2A1. Interacts with EPS15, EPS15R, ITSN1 and ITSN2; recruit those scaffolding proteins which in turn may interact with the adaptor protein complex AP-2 at the plasma membrane. Interacts with DAB2 (via DPF motifs); mediates LDL receptor/LDLR endocytosis. Post-translationally, ubiquitinated. Mainly undergoes monoubiquitination but also polyubiquitination. Ubiquitously expressed (at protein level).

The protein localises to the membrane. Its subcellular location is the clathrin-coated pit. Functions in an early step of clathrin-mediated endocytosis. Has both a membrane binding/bending activity and the ability to recruit proteins essential to the formation of functional clathrin-coated pits. Has a lipid-binding activity with a preference for membranes enriched in phosphatidylserine and phosphoinositides (Pi(4,5) biphosphate) like the plasma membrane. Its membrane-bending activity might be important for the subsequent action of clathrin and adaptors in the formation of clathrin-coated vesicles. Involved in adaptor protein complex AP-2-dependent endocytosis of the transferrin receptor, it also functions in the AP-2-independent endocytosis of the LDL receptor. The polypeptide is F-BAR domain only protein 2 (Fcho2) (Mus musculus (Mouse)).